A 407-amino-acid chain; its full sequence is Obg-like ATPase homolog (407 aa).

In terms of domain architecture, OBG-type G spans 46-301; the sequence is LKIGIVGMPN…LTPEEAAQEC (256 aa). ATP is bound by residues 55–60 and Met-249; that span reads NIGKST. The TGS domain occupies 322–405; it reads NLIHYFTASE…EPGDIIFWKI (84 aa).

This sequence belongs to the TRAFAC class OBG-HflX-like GTPase superfamily. OBG GTPase family.

In terms of biological role, hydrolyzes ATP, and can also hydrolyze GTP with lower efficiency. Has lower affinity for GTP. The polypeptide is Obg-like ATPase homolog (Schizosaccharomyces pombe (strain 972 / ATCC 24843) (Fission yeast)).